Here is a 964-residue protein sequence, read N- to C-terminus: Coatomer subunit beta (964 aa).

HEAT repeat units follow at residues 129–166 (ELLE…NFDW), 238–275 (AERS…APTA), 314–351 (KVMQ…SRNI), 393–430 (DVAA…KFPA), and 466–506 (SQIL…QQGS). The segment covering 490–501 (RRLAGDQTEEQK) has biased composition (basic and acidic residues). A disordered region spans residues 490–530 (RRLAGDQTEEQKQQQGSAGGNAAGSAAEGSGSGNASNKVTS). The span at 512 to 526 (AGSAAEGSGSGNASN) shows a compositional bias: low complexity.

Oligomeric complex that consists of at least the alpha, beta, beta', gamma, delta, epsilon and zeta subunits. During oogenesis and spermatogenesis, expressed in ovariole, germarium, testis tip and testis.

The protein resides in the cytoplasm. Its subcellular location is the golgi apparatus membrane. It localises to the cytoplasmic vesicle. It is found in the COPI-coated vesicle membrane. The coatomer is a cytosolic protein complex that binds to dilysine motifs and reversibly associates with Golgi non-clathrin-coated vesicles, which further mediate biosynthetic protein transport from the ER, via the Golgi up to the trans Golgi network. Coatomer complex is required for budding from Golgi membranes, and is essential for the retrograde Golgi-to-ER transport of dilysine-tagged proteins. Required for limiting lipid storage in lipid droplets. This is Coatomer subunit beta from Drosophila melanogaster (Fruit fly).